A 43-amino-acid chain; its full sequence is Protein PsbN (43 aa).

A helical membrane pass occupies residues 5-27 (TLVAISISGLLVSFTGYALYTAF).

Belongs to the PsbN family.

The protein localises to the plastid. Its subcellular location is the chloroplast thylakoid membrane. Its function is as follows. May play a role in photosystem I and II biogenesis. This is Protein PsbN from Coelogyne cristata (Orchid).